The chain runs to 243 residues: Zinc import ATP-binding protein ZnuC (243 aa).

The ABC transporter domain occupies 8 to 225; sequence LNLSNVSYYI…SEFQKLFGHH (218 aa). 40 to 47 provides a ligand contact to ATP; that stretch reads GPNGAGKS.

The protein belongs to the ABC transporter superfamily. Zinc importer (TC 3.A.1.15.5) family. In terms of assembly, the complex is composed of two ATP-binding proteins (ZnuC), two transmembrane proteins (ZnuB) and a solute-binding protein (ZnuA).

The protein localises to the cell inner membrane. The catalysed reaction is Zn(2+)(out) + ATP(in) + H2O(in) = Zn(2+)(in) + ADP(in) + phosphate(in) + H(+)(in). Its function is as follows. Part of the ABC transporter complex ZnuABC involved in zinc import. Responsible for energy coupling to the transport system. The chain is Zinc import ATP-binding protein ZnuC from Psychrobacter arcticus (strain DSM 17307 / VKM B-2377 / 273-4).